We begin with the raw amino-acid sequence, 101 residues long: NAD(P)H-quinone oxidoreductase subunit 4L, chloroplastic (101 aa).

3 helical membrane passes run 2–22, 32–52, and 61–81; these read MLEHILVLSAYLFSIGIYGLI, MCLELILNAVNINFVTFSDFF, and IFSIFVIAIAAAEAAIGSAIV.

The protein belongs to the complex I subunit 4L family. In terms of assembly, NDH is composed of at least 16 different subunits, 5 of which are encoded in the nucleus.

It is found in the plastid. It localises to the chloroplast thylakoid membrane. The catalysed reaction is a plastoquinone + NADH + (n+1) H(+)(in) = a plastoquinol + NAD(+) + n H(+)(out). It catalyses the reaction a plastoquinone + NADPH + (n+1) H(+)(in) = a plastoquinol + NADP(+) + n H(+)(out). NDH shuttles electrons from NAD(P)H:plastoquinone, via FMN and iron-sulfur (Fe-S) centers, to quinones in the photosynthetic chain and possibly in a chloroplast respiratory chain. The immediate electron acceptor for the enzyme in this species is believed to be plastoquinone. Couples the redox reaction to proton translocation, and thus conserves the redox energy in a proton gradient. The polypeptide is NAD(P)H-quinone oxidoreductase subunit 4L, chloroplastic (Gossypium hirsutum (Upland cotton)).